Consider the following 227-residue polypeptide: Riboflavin kinase (227 aa).

The interval 1–92 is H-T-H motif-like; the sequence is MSKDYEVFPL…LKRTIDSSTF (92 aa). The segment at 93–227 is riboflavin kinase; it reads LTLRGYVVPG…GDKVEVVIPV (135 aa). 102 to 107 contributes to the CDP binding site; sequence GLGEGA. Positions 131 and 133 each coordinate Mg(2+). Residues threonine 194 and glutamate 202 each contribute to the FMN site. 207 to 210 is a binding site for CDP; that stretch reads VRLR.

It belongs to the archaeal riboflavin kinase family. The cofactor is Mg(2+).

It catalyses the reaction riboflavin + CTP = CDP + FMN + H(+). It functions in the pathway cofactor biosynthesis; FMN biosynthesis; FMN from riboflavin (CTP route): step 1/1. In terms of biological role, catalyzes the CTP-dependent phosphorylation of riboflavin (vitamin B2) to form flavin mononucleotide (FMN). This is Riboflavin kinase (ribK) from Thermofilum pendens (strain DSM 2475 / Hrk 5).